The following is a 999-amino-acid chain: Testis anion transporter 1 (999 aa).

At 1–93 (MQTERSLQSF…YRFKDWLLGD (93 aa)) the chain is on the cytoplasmic side. Residues 94–114 (LLAGLSVGLVQVPQGLILSLL) traverse the membrane as a helical segment. The Extracellular portion of the chain corresponds to 115–117 (TRQ). The helical transmembrane segment at 118–138 (LIPPLNVTYAAFCSSVIYVIF) threads the bilayer. Position 139 (G139) is a topological domain, cytoplasmic. Residues 140–160 (SCHQMSIGPFFLVSALMINVL) traverse the membrane as a helical segment. Topologically, residues 161–200 (KDRPFNNGHLILGTFVKDDFSVPTFYLSYNRSLSMVASTT) are extracellular. An N-linked (GlcNAc...) asparagine glycan is attached at N190. Residues 201 to 221 (FLTGIIQLSMGMLGMGFMATY) form a helical membrane-spanning segment. At 222-230 (LPEAATSAY) the chain is on the cytoplasmic side. Residues 231-251 (LAAVALHIILAQMTCILGIMV) traverse the membrane as a helical segment. The Extracellular portion of the chain corresponds to 252-268 (SFHAGPISFIYNIINYC). A helical transmembrane segment spans residues 269–289 (IALPKANSTSILLFITSVVAL). Over 290–305 (RINKCIRITFNRYPIE) the chain is Cytoplasmic. A helical transmembrane segment spans residues 306–326 (FPMELLLILGFSLLTSKITMA). The Extracellular segment spans residues 327-354 (TENSKMLMNMIPYSFVFPENPEFGILSR). Residues 355 to 375 (VVLQALSLSFVSSFLLISLGK) form a helical membrane-spanning segment. At 376–390 (KIANFHNYRTNSNQD) the chain is on the cytoplasmic side. A helical membrane pass occupies residues 391 to 411 (LIAIGLCNLLSSFFKCCVFTG). The Extracellular segment spans residues 412 to 427 (SLSRTTIQDKSGGRQQ). Residues 428–448 (FASLVGAGVMLLLMVKMESFF) form a helical membrane-spanning segment. Residues 449-453 (HNLPN) lie on the Cytoplasmic side of the membrane. A helical transmembrane segment spans residues 454 to 474 (AVLAGIILSNVVPYLEAIYNL). Over 475 to 494 (PSLWRQDQYECIIWMVTFSS) the chain is Extracellular. Residues 495–515 (AILLGLDVGLLISLAFTFFVI) form a helical membrane-spanning segment. Topologically, residues 516–544 (TIRSHRTKILVLGQIPNTNIYRNVNDYRE) are cytoplasmic. The STAS domain maps to 541–796 (DYREVILIPG…LSLHDAVLFA (256 aa)). Residues 545–565 (VILIPGVKIFQCCSSITFVNV) traverse the membrane as a helical segment. At 566-999 (YHLKQKVLKE…RKPHNYPNSP (434 aa)) the chain is on the extracellular side. The interval 661–999 (TVSSTSQRNI…RKPHNYPNSP (339 aa)) is interaction with RACGAP1. 2 disordered regions span residues 678-701 (EKAW…SESL) and 893-999 (SELD…PNSP). The segment covering 684–696 (NSPPRNSPLPPPE) has biased composition (pro residues). 2 stretches are compositionally biased toward acidic residues: residues 893 to 903 (SELDPGSELDS) and 912 to 947 (ELES…EPEP). Positions 973–982 (GSSNSQSRAP) are enriched in polar residues.

It belongs to the SLC26A/SulP transporter (TC 2.A.53) family. Interacts with RACGAP1. Interacts with CFTR; stimulates anion transport activity of CFTR. Post-translationally, N-glycosylated. As to expression, expressed in testis and epididymis. Located at the end of the midpiece of the flagella, known as the annulus, in spermatozoa.

It localises to the membrane. The enzyme catalyses sulfate(out) + chloride(in) = sulfate(in) + chloride(out). The catalysed reaction is oxalate(in) + chloride(out) = oxalate(out) + chloride(in). Functionally, antiporter that mediates the exchange of sulfate and oxalate against chloride ions across a membrane. Stimulates anion transport activity of CFTR. May cooperate with CFTR in the regulation of chloride and bicarbonate ions fluxes required for activation of the ADCY10/PKA pathway during sperm motility and sperm capacitation. May play a role in sperm tail differentiation and motility and hence male fertility. The polypeptide is Testis anion transporter 1 (Mus musculus (Mouse)).